The sequence spans 325 residues: Clavaminate synthase 2 (325 aa).

3 residues coordinate Fe cation: H145, E147, and H280. R294 contacts 2-oxoglutarate.

It belongs to the clavaminate synthase family. The cofactor is Fe(2+).

The catalysed reaction is deoxyamidinoproclavaminate + 2-oxoglutarate + O2 = amidinoproclavaminate + succinate + CO2. It catalyses the reaction proclavaminate + 2-oxoglutarate + O2 = dihydroclavaminate + succinate + CO2 + H2O. It carries out the reaction dihydroclavaminate + 2-oxoglutarate + O2 = clavaminate + succinate + CO2 + H2O. It functions in the pathway antibiotic biosynthesis; clavulanate biosynthesis; clavulanate from D-glyceraldehyde 3-phosphate and L-arginine: step 3/8. Its pathway is antibiotic biosynthesis; clavulanate biosynthesis; clavulanate from D-glyceraldehyde 3-phosphate and L-arginine: step 5/8. It participates in antibiotic biosynthesis; clavulanate biosynthesis; clavulanate from D-glyceraldehyde 3-phosphate and L-arginine: step 6/8. In Streptomyces clavuligerus, this protein is Clavaminate synthase 2 (cs2).